The primary structure comprises 49 residues: Large ribosomal subunit protein bL33A (49 aa).

Belongs to the bacterial ribosomal protein bL33 family.

This chain is Large ribosomal subunit protein bL33A, found in Staphylococcus saprophyticus subsp. saprophyticus (strain ATCC 15305 / DSM 20229 / NCIMB 8711 / NCTC 7292 / S-41).